Here is a 284-residue protein sequence, read N- to C-terminus: Tropomyosin Per a 7.0102 (284 aa).

Residues 1–266 (MDAIKKKMQA…EDELVHEKEK (266 aa)) adopt a coiled-coil conformation.

Belongs to the tropomyosin family. As to quaternary structure, homodimer. As to expression, expressed in striated skeletal muscle (at protein level).

Tropomyosin, in association with the troponin complex, plays a central role in the calcium dependent regulation of muscle contraction. The protein is Tropomyosin Per a 7.0102 of Periplaneta americana (American cockroach).